Here is a 307-residue protein sequence, read N- to C-terminus: Undecaprenyl-diphosphatase (307 aa).

6 helical membrane passes run 40-60 (AAKT…VVYF), 79-99 (LRLA…GLLF), 107-127 (LFGP…MIGV), 183-203 (AAAA…ATVF), 219-239 (IVAL…VIAV), and 249-269 (LAPF…LWIA).

The protein belongs to the UppP family.

Its subcellular location is the cell inner membrane. The catalysed reaction is di-trans,octa-cis-undecaprenyl diphosphate + H2O = di-trans,octa-cis-undecaprenyl phosphate + phosphate + H(+). In terms of biological role, catalyzes the dephosphorylation of undecaprenyl diphosphate (UPP). Confers resistance to bacitracin. This is Undecaprenyl-diphosphatase from Sorangium cellulosum (strain So ce56) (Polyangium cellulosum (strain So ce56)).